The primary structure comprises 552 residues: MEKVQQTIRAARGTELQTKGWVQEAALRMLMNNLDPEVAEKPEELVVYGGIGRAARNWESYHAIVDSLKTLENDETLLVQSGKPVAIFKSHEDAPRVLLANSNLVPKWANWDHFRELEKKGLMMYGQMTAGSWIYIGTQGILQGTYETFGEAARQHFDGSLKGTVTITAGLGGMGGAQPLAVTMNGGVVIAIDVDKRSIDRRIEKRYCDKYTESLEEALAIANEYKEKKEPISIGLLGNAAEILPELVNRNIIPDLVTDQTSAHDPLNGYIPVGYTVEEAAKLREEDPERYVQLSKESMKKHVEAMLAMQEKGAITFDYGNNIRQVAFDEGLKNAFDFPGFVPAFIRPLFCEGKGPFRWVALSGDPEDIYKTDEVILREFADNEHLCNWIRMARQQVEFQGLPSRICWLGYGERAKFGRIINEMVANGELSAPIVIGRDHLDCGSVASPNRETESMKDGSDAVADWPILNALINSVNGASWVSVHHGGGVGMGYSLHAGMVIVADGTEAAAKRIERVLTSDPGMGVVRHVDAGYDLAVQTAKEKGVNIPMMK.

Residues 49 to 50, glutamine 127, 173 to 175, aspartate 193, 239 to 240, 260 to 264, 270 to 271, and tyrosine 319 each bind NAD(+); these read GG, GMG, NA, QTSAH, and YI. Residue cysteine 407 is part of the active site. Glycine 489 serves as a coordination point for NAD(+).

The protein belongs to the urocanase family. It depends on NAD(+) as a cofactor.

Its subcellular location is the cytoplasm. It catalyses the reaction 4-imidazolone-5-propanoate = trans-urocanate + H2O. It participates in amino-acid degradation; L-histidine degradation into L-glutamate; N-formimidoyl-L-glutamate from L-histidine: step 2/3. Its function is as follows. Catalyzes the conversion of urocanate to 4-imidazolone-5-propionate. This chain is Urocanate hydratase, found in Bacillus mycoides (strain KBAB4) (Bacillus weihenstephanensis).